Consider the following 757-residue polypeptide: Exo-alpha-(1-&gt;6)-L-arabinopyranosidase (757 aa).

The active site involves D232.

This sequence belongs to the glycosyl hydrolase 3 family. Homotetramer.

Completely inhibited by Cu(2+) and Fe(2+). In terms of biological role, catalyzes the hydrolysis of a non-reducing terminal alpha-L-arabinopyranosidic linkage in ginsenoside Rb2 (alpha-L-arabinopyranosyl-(1-&gt;6)-alpha-D-glucopyranosyl) to release alpha-D-glucopyranosyl (Rd). It is not able to hydrolyze alpha-L-arabinofuranosyl-(1-&gt;6)-alpha-D-glucopyranosyl (Rc). This is Exo-alpha-(1-&gt;6)-L-arabinopyranosidase from Bifidobacterium breve (strain ACS-071-V-Sch8b).